Consider the following 224-residue polypeptide: Ribonuclease 3 (224 aa).

In terms of domain architecture, RNase III spans 4-127; that stretch reads YSKLEKCLDY…IMGAIYLESG (124 aa). Residue Glu40 participates in Mg(2+) binding. Asp44 is an active-site residue. Positions 113 and 116 each coordinate Mg(2+). Residue Glu116 is part of the active site. A DRBM domain is found at 154-223; the sequence is DYKTALQEIT…AKIAIDKLKE (70 aa).

The protein belongs to the ribonuclease III family. As to quaternary structure, homodimer. Mg(2+) serves as cofactor.

The protein localises to the cytoplasm. The catalysed reaction is Endonucleolytic cleavage to 5'-phosphomonoester.. Its function is as follows. Digests double-stranded RNA. Involved in the processing of primary rRNA transcript to yield the immediate precursors to the large and small rRNAs (23S and 16S). Processes some mRNAs, and tRNAs when they are encoded in the rRNA operon. Processes pre-crRNA and tracrRNA of type II CRISPR loci if present in the organism. The sequence is that of Ribonuclease 3 from Aliarcobacter butzleri (strain RM4018) (Arcobacter butzleri).